Reading from the N-terminus, the 346-residue chain is UDP-N-acetylenolpyruvoylglucosamine reductase (346 aa).

The FAD-binding PCMH-type domain maps to 18–189 (LRAQARAFIA…VSVVFALKTH (172 aa)). The active site involves R165. The active-site Proton donor is the S240. E336 is an active-site residue.

It belongs to the MurB family. Requires FAD as cofactor.

The protein localises to the cytoplasm. It catalyses the reaction UDP-N-acetyl-alpha-D-muramate + NADP(+) = UDP-N-acetyl-3-O-(1-carboxyvinyl)-alpha-D-glucosamine + NADPH + H(+). It participates in cell wall biogenesis; peptidoglycan biosynthesis. Its function is as follows. Cell wall formation. This is UDP-N-acetylenolpyruvoylglucosamine reductase from Neisseria meningitidis serogroup C (strain 053442).